Reading from the N-terminus, the 1058-residue chain is Zinc finger protein 865 (1058 aa).

3 disordered regions span residues 1–24, 58–134, and 156–201; these read MEANQAGSGAGGGGSSGIGGEDGV, LPCT…PPLF, and GNLK…ACDP. The segment covering 8–21 has biased composition (gly residues); the sequence is SGAGGGGSSGIGGE. Residues 61–78 are compositionally biased toward pro residues; the sequence is TPGPPPQPPPQPPPPQYD. The span at 93–113 shows a compositional bias: low complexity; it reads SSSSSSSSSSSSSSSSSSSSS. The segment covering 120–133 has biased composition (pro residues); the sequence is PPLPPTFGAPPPPL. Residues 172 to 187 show a composition bias toward low complexity; that stretch reads GLGTPTGTPGPLTTPS. 2 C2H2-type zinc fingers span residues 220-242 and 248-270; these read FPCGVCQKSFKQSSHLVQHMLVH and YECGICGRTYNHVSSLIRHRRCH. Residues 269–342 are disordered; that stretch reads CHKDVPPTPT…PPGVAMPPSA (74 aa). Low complexity predominate over residues 294–324; that stretch reads PVSTASATASSDPAAVSSGPSATPATPATST. 9 C2H2-type zinc fingers span residues 350–372, 378–400, 407–429, 439–461, 546–568, 574–596, 602–624, 664–686, and 692–714; these read FACSLCWKVFKKPSHLHQHQIIH, FSCSVCSKSFNRRESLKRHVKTH, LPCGICGKVFRDASYLLKHQAAH, YPCDLCGKTYSAPQSLLRHKAAH, FCCGICGRAFGRRETLKRHERIH, HQCPVCGKRFRESFHLSKHHVVH, YKCELCGKVFGYPQSLTRHRQVH, YACSDCGEHFPDLFHVMSHKEAH, and YGCDACGKTFGFIENLMWHKLVH. The tract at residues 459–486 is disordered; sequence AAHAPPVATEPAKDGAASVPQPPPPFPP. Residues 721 to 743 form a disordered region; that stretch reads LLAPTPSGPQSSDGGSSGGGTDA. 9 C2H2-type zinc fingers span residues 791-813, 819-841, 847-869, 875-897, 903-925, 931-953, 959-981, 988-1010, and 1016-1038; these read FSCATCGQSFKHFLGLVTHKYVH, LGCGLCGQSFAGAYDLLLHRRSH, FRCPVCGKRFWEAALLMRHQRCH, YRCGVCGRGFLRSWYLRQHRVVH, FKCGVCAKHFAQSSSLAEHRRLH, QRCGACGKTFRYRSNLLEHQRLH, YRCEHCGKGFFYLSSVLRHQRAH, LRCPACLKAFKDPGYFRKHLAAH, and FRCSSCGEGFANTYGLKKHRLMH. Residue Lys801 forms a Glycyl lysine isopeptide (Lys-Gly) (interchain with G-Cter in SUMO2) linkage. Lys1039 participates in a covalent cross-link: Glycyl lysine isopeptide (Lys-Gly) (interchain with G-Cter in SUMO2).

This sequence belongs to the krueppel C2H2-type zinc-finger protein family.

The protein localises to the nucleus. In terms of biological role, may be involved in transcriptional regulation. This is Zinc finger protein 865 (Znf865) from Mus musculus (Mouse).